The chain runs to 296 residues: NAD kinase (296 aa).

The active-site Proton acceptor is the aspartate 74. NAD(+) is bound by residues 74 to 75 (DG), 148 to 149 (ND), arginine 176, aspartate 178, and 189 to 194 (TAYALS).

The protein belongs to the NAD kinase family. The cofactor is a divalent metal cation.

The protein resides in the cytoplasm. The catalysed reaction is NAD(+) + ATP = ADP + NADP(+) + H(+). Functionally, involved in the regulation of the intracellular balance of NAD and NADP, and is a key enzyme in the biosynthesis of NADP. Catalyzes specifically the phosphorylation on 2'-hydroxyl of the adenosine moiety of NAD to yield NADP. The protein is NAD kinase of Nitrosomonas europaea (strain ATCC 19718 / CIP 103999 / KCTC 2705 / NBRC 14298).